Reading from the N-terminus, the 701-residue chain is C6 finger domain transcription factor nscR (701 aa).

Residues 17–43 (CELCRERKVKCDKLDPCTNCSSAGVIC) constitute a DNA-binding region (zn(2)-C6 fungal-type).

Its subcellular location is the nucleus. In terms of biological role, transcription factor that specifically regulates the neosartoricin B biosynthesis gene cluster. The sequence is that of C6 finger domain transcription factor nscR from Arthroderma benhamiae (strain ATCC MYA-4681 / CBS 112371) (Trichophyton mentagrophytes).